A 1300-amino-acid chain; its full sequence is Nephrocystin-3 (1300 aa).

Positions 82–183 (KNNEVASMQK…LQRLQAQGIQ (102 aa)) form a coiled coil. 9 TPR repeats span residues 443–476 (TMED…ICEL), 916–949 (ADLY…RETA), 958–991 (AQSL…SENA), 1000–1033 (AREL…RQKS), 1066–1099 (ARTL…RERV), 1108–1141 (AQSI…RRRA), 1150–1183 (AYTV…RQKS), 1192–1225 (ATAL…YEDS), and 1234–1267 (GETL…KETE). Residues 1268-1288 (TSVLGAKAPSGHSSSGGDTYS) form a disordered region. A compositionally biased stretch (polar residues) spans 1278-1288 (GHSSSGGDTYS).

The protein localises to the cell projection. It localises to the cilium. Required for normal ciliary development and function. Inhibits disheveled-1-induced canonical Wnt-signaling activity and may also play a role in the control of non-canonical Wnt signaling that regulates planar cell polarity. Probably acts as a molecular switch between different Wnt signaling pathways. Required for proper convergent extension cell movements. In Xenopus laevis (African clawed frog), this protein is Nephrocystin-3 (nphp3).